The primary structure comprises 148 residues: Stathmin (148 aa).

An SLD domain is found at 4-145 (SDIQVKELEK…NKEGKDPGEA (142 aa)). Ser16 is subject to Phosphoserine; by PKA. Ser38 carries the post-translational modification Phosphoserine; by CDK1. Positions 41–140 (KKKDLSLEEI…EEVRKNKEGK (100 aa)) form a coiled coil. At Ser63 the chain carries Phosphoserine; by PKA. The disordered stretch occupies residues 122 to 148 (RLREKDKHIEEVRKNKEGKDPGEAETN).

This sequence belongs to the stathmin family. In terms of assembly, binds to two alpha/beta-tubulin heterodimers. Post-translationally, many different phosphorylated forms are observed depending on specific combinations among the sites which can be phosphorylated. MAPK is responsible for the phosphorylation of stathmin in response to NGF.

It is found in the cytoplasm. The protein localises to the cytoskeleton. In terms of biological role, involved in the regulation of the microtubule (MT) filament system by destabilizing microtubules. It prevents assembly and promotes disassembly of microtubules. The protein is Stathmin (STMN1) of Gallus gallus (Chicken).